Reading from the N-terminus, the 411-residue chain is Alpha-1-antitrypsin 1-6 (411 aa).

Positions 1–25 are cleaved as a signal peptide; that stretch reads MTTPFSSHGLLLLVGLCCLLLITKT. N-linked (GlcNAc...) asparagine glycosylation is found at N50, N89, N101, and N164.

It belongs to the serpin family. As to expression, expressed predominantly in epididymis where it is found in the epithelial cells of the caput, corpus and cauda epididymis.

The protein resides in the secreted. Its function is as follows. Inhibitor of serine proteases. The chain is Alpha-1-antitrypsin 1-6 from Mus musculus (Mouse).